A 1020-amino-acid chain; its full sequence is Glycine dehydrogenase (decarboxylating), mitochondrial (1020 aa).

The transit peptide at 1-35 (MQSCARAWGLRLGRGVGGGRRLAGGSGPCWAPRSR) directs the protein to the mitochondrion. The tract at residues 21–46 (RLAGGSGPCWAPRSRDSSSGGGDSAA) is disordered. An N6-acetyllysine mark is found at Lys-447, Lys-514, Lys-648, and Lys-664. The residue at position 754 (Lys-754) is an N6-(pyridoxal phosphate)lysine.

Belongs to the GcvP family. As to quaternary structure, homodimer. Interacts with GCSH. The glycine cleavage system is composed of four proteins: P (GLDC), T (GCST), L (DLD) and H (GCSH). It depends on pyridoxal 5'-phosphate as a cofactor.

It localises to the mitochondrion. The catalysed reaction is N(6)-[(R)-lipoyl]-L-lysyl-[glycine-cleavage complex H protein] + glycine + H(+) = N(6)-[(R)-S(8)-aminomethyldihydrolipoyl]-L-lysyl-[glycine-cleavage complex H protein] + CO2. Stimulated by lipoic acid. Inhibited in presence of methylamine. In terms of biological role, the glycine cleavage system catalyzes the degradation of glycine. The P protein (GLDC) binds the alpha-amino group of glycine through its pyridoxal phosphate cofactor; CO(2) is released and the remaining methylamine moiety is then transferred to the lipoamide cofactor of the H protein (GCSH). The chain is Glycine dehydrogenase (decarboxylating), mitochondrial from Homo sapiens (Human).